The chain runs to 303 residues: Probable cat1 operon transcriptional activator (303 aa).

Positions 1-58 (MDLRQFRYFVAVARERNFTRAARQLNIAQPPLSRQIQLLEEEVGVPLLIRNSRPVQLT) constitute an HTH lysR-type domain. The H-T-H motif DNA-binding region spans 18–37 (FTRAARQLNIAQPPLSRQIQ).

This sequence belongs to the LysR transcriptional regulatory family.

Probable positive regulator of the cat1 operon which encode enzymes responsible for the degradation of catechol to acetyl-CoA via the beta-ketoadipate pathway. This chain is Probable cat1 operon transcriptional activator, found in Acinetobacter lwoffii.